The chain runs to 356 residues: GTPase Obg (356 aa).

In terms of domain architecture, Obg spans 2 to 160 (ESFVDEVAIE…KFLRLSLKLL (159 aa)). One can recognise an OBG-type G domain in the interval 161-329 (ADVGIVGLPN…LLENMDEVFF (169 aa)). Residues 167-174 (GLPNAGKS), 192-196 (FTTLS), 215-218 (DIPG), 282-285 (NKID), and 310-312 (SAD) each bind GTP. S174 and T194 together coordinate Mg(2+).

This sequence belongs to the TRAFAC class OBG-HflX-like GTPase superfamily. OBG GTPase family. In terms of assembly, monomer. Mg(2+) serves as cofactor.

Its subcellular location is the cytoplasm. Functionally, an essential GTPase which binds GTP, GDP and possibly (p)ppGpp with moderate affinity, with high nucleotide exchange rates and a fairly low GTP hydrolysis rate. Plays a role in control of the cell cycle, stress response, ribosome biogenesis and in those bacteria that undergo differentiation, in morphogenesis control. This is GTPase Obg from Leptospira interrogans serogroup Icterohaemorrhagiae serovar copenhageni (strain Fiocruz L1-130).